We begin with the raw amino-acid sequence, 238 residues long: Ribonuclease 3 (238 aa).

Residues 4-130 (IQTLFQTLNI…LFGAIYLDLG (127 aa)) enclose the RNase III domain. Glu45 is a Mg(2+) binding site. Asp49 is a catalytic residue. Mg(2+) contacts are provided by Asp116 and Glu119. Glu119 is an active-site residue. Positions 154 to 222 (DFKTQLQEIV…AQQALSKVAK (69 aa)) constitute a DRBM domain. A disordered region spans residues 215–238 (QALSKVAKPKDLLNNKGGKEKELQ). Residues 222–238 (KPKDLLNNKGGKEKELQ) are compositionally biased toward basic and acidic residues.

This sequence belongs to the ribonuclease III family. Homodimer. Mg(2+) is required as a cofactor.

The protein resides in the cytoplasm. It catalyses the reaction Endonucleolytic cleavage to 5'-phosphomonoester.. Digests double-stranded RNA. Involved in the processing of primary rRNA transcript to yield the immediate precursors to the large and small rRNAs (23S and 16S). Processes some mRNAs, and tRNAs when they are encoded in the rRNA operon. Processes pre-crRNA and tracrRNA of type II CRISPR loci if present in the organism. The sequence is that of Ribonuclease 3 from Onion yellows phytoplasma (strain OY-M).